The following is a 144-amino-acid chain: Large ribosomal subunit protein uL15 (144 aa).

A disordered region spans residues 1 to 54; it reads MRLNTLSPAEGSKKAGKRLGRGIGSGLGKTGGRGHKGQKSRSGGGVRRGFEGGQ. The span at 21–31 shows a compositional bias: gly residues; that stretch reads RGIGSGLGKTG.

It belongs to the universal ribosomal protein uL15 family. In terms of assembly, part of the 50S ribosomal subunit.

Its function is as follows. Binds to the 23S rRNA. The chain is Large ribosomal subunit protein uL15 from Salmonella enteritidis PT4 (strain P125109).